Consider the following 822-residue polypeptide: Putative ESX-1 scaffolding and assembly protein SaeB (822 aa).

Its function is as follows. May be involved in assembly of the ESX-1 / type VII specialized secretion system (T7SS), which exports several proteins including EsxA and EsxB. Involved in DNA conjugation in recipient (MKD8) but not donor (mc(2)155) strain. In Mycolicibacterium smegmatis (strain MKD8) (Mycobacterium smegmatis), this protein is Putative ESX-1 scaffolding and assembly protein SaeB (saeB).